Consider the following 189-residue polypeptide: Protein GrpE (189 aa).

Positions 1 to 37 (MSDSSKEKKKKFADMVSRQKGDDQQSDNHKQTDDLNE) are disordered. Residues 17-33 (SRQKGDDQQSDNHKQTD) are compositionally biased toward basic and acidic residues.

This sequence belongs to the GrpE family. In terms of assembly, homodimer.

The protein resides in the cytoplasm. In terms of biological role, participates actively in the response to hyperosmotic and heat shock by preventing the aggregation of stress-denatured proteins, in association with DnaK and GrpE. It is the nucleotide exchange factor for DnaK and may function as a thermosensor. Unfolded proteins bind initially to DnaJ; upon interaction with the DnaJ-bound protein, DnaK hydrolyzes its bound ATP, resulting in the formation of a stable complex. GrpE releases ADP from DnaK; ATP binding to DnaK triggers the release of the substrate protein, thus completing the reaction cycle. Several rounds of ATP-dependent interactions between DnaJ, DnaK and GrpE are required for fully efficient folding. This is Protein GrpE from Wolbachia pipientis wMel.